A 492-amino-acid polypeptide reads, in one-letter code: Solute carrier family 2, facilitated glucose transporter member 1 (492 aa).

Met-1 is modified (N-acetylmethionine). The Cytoplasmic segment spans residues 1-11; sequence MEPSSKKVTGR. Residues 12–33 form a helical membrane-spanning segment; it reads LMLAVGGAVLGSLQFGYNTGVI. Over 34-66 the chain is Extracellular; sequence NAPQKVIEEFYNQTWNHRYGESIPSTTLTTLWS. Asn-45 carries N-linked (GlcNAc...) asparagine glycosylation. The helical transmembrane segment at 67 to 87 threads the bilayer; the sequence is LSVAIFSVGGMIGSFSVGLFV. Residues 88 to 90 lie on the Cytoplasmic side of the membrane; sequence NRF. The chain crosses the membrane as a helical span at residues 91 to 112; sequence GRRNSMLMMNLLAFVSAVLMGF. Residues 113-120 are Extracellular-facing; it reads SKLGKSFE. The helical transmembrane segment at 121-144 threads the bilayer; sequence MLILGRFIIGVYCGLTTGFVPMYV. The Cytoplasmic portion of the chain corresponds to 145–155; sequence GEVSPTALRGA. The chain crosses the membrane as a helical span at residues 156–176; sequence LGTLHQLGIVVGILIAQVFGL. Residue Gln-161 coordinates D-glucose. At 177 to 185 the chain is on the extracellular side; sequence DSIMGNADL. Residues 186–206 form a helical membrane-spanning segment; that stretch reads WPLLLSVIFIPALLQCILLPF. Topologically, residues 207–271 are cytoplasmic; it reads CPESPRFLLI…LFRSPAYRQP (65 aa). A Phosphoserine modification is found at Ser-226. Residues 272 to 293 traverse the membrane as a helical segment; sequence ILIAVVLQLSQQLSGINAVFYY. D-glucose-binding positions include 282–283 and Asn-288; that span reads QQ. Residues 294–306 are Extracellular-facing; that stretch reads STSIFEKAGVQQP. Residues 307-328 form a helical membrane-spanning segment; that stretch reads VYATIGSGIVNTAFTVVSLFVV. Asn-317 is a binding site for D-glucose. Over 329–334 the chain is Cytoplasmic; sequence ERAGRR. Residues 335–355 form a helical membrane-spanning segment; it reads TLHLIGLAGMAGCAVLMTIAL. The Extracellular segment spans residues 356 to 365; that stretch reads ALLEQLPWMS. The helical transmembrane segment at 366 to 388 threads the bilayer; sequence YLSIVAIFGFVAFFEVGPGPIPW. Residues Glu-380 and Trp-388 each contribute to the D-glucose site. The Cytoplasmic portion of the chain corresponds to 389-401; that stretch reads FIVAELFSQGPRP. The chain crosses the membrane as a helical span at residues 402–422; it reads AAVAVAGFSNWTSNFIVGMCF. At 423–429 the chain is on the extracellular side; sequence QYVEQLC. Residues 430–450 form a helical membrane-spanning segment; the sequence is GPYVFIIFTVLLVLFFIFTYF. The Cytoplasmic segment spans residues 451 to 492; the sequence is KVPETKGRTFDEIASGFRQGGASQSDKTPEELFHPLGADSQV. Ser-465 carries the post-translational modification Phosphoserine. The interval 468–492 is disordered; sequence RQGGASQSDKTPEELFHPLGADSQV. The residue at position 478 (Thr-478) is a Phosphothreonine. Ser-490 is subject to Phosphoserine.

Belongs to the major facilitator superfamily. Sugar transporter (TC 2.A.1.1) family. Glucose transporter subfamily. In terms of assembly, found in a complex with ADD2, DMTN and SLC2A1. Interacts (via C-terminus cytoplasmic region) with DMTN. Interacts with SNX27; the interaction is required when endocytosed to prevent degradation in lysosomes and promote recycling to the plasma membrane. Interacts with STOM. Interacts with GIPC (via PDZ domain). Interacts with SGTA (via Gln-rich region). Interacts with isoform 1 of BSG. Interacts with SMIM43; the interaction may promote SLC2A1-mediated glucose transport to meet the energy needs of mesendoderm differentiation. Post-translationally, phosphorylation at Ser-226 by PKC promotes glucose uptake by increasing cell membrane localization. Detected in osteoblastic cells (at protein level). Detected in brain, and at lower levels in kidney, heart and lung.

It is found in the cell membrane. The protein localises to the photoreceptor inner segment. It carries out the reaction D-glucose(out) = D-glucose(in). The uptake of glucose is inhibited by cytochalasin B. Glucose uptake is increased in response to phorbol ester 12-O-tetradecanoylphorbol-13-acetate (TPA) treatment: TPA-induced glucose uptake requires phosphorylation at Ser-226. In terms of biological role, facilitative glucose transporter, which is responsible for constitutive or basal glucose uptake. Has a very broad substrate specificity; can transport a wide range of aldoses including both pentoses and hexoses. Most important energy carrier of the brain: present at the blood-brain barrier and assures the energy-independent, facilitative transport of glucose into the brain. In association with BSG and NXNL1, promotes retinal cone survival by increasing glucose uptake into photoreceptors. Required for mesendoderm differentiation. The sequence is that of Solute carrier family 2, facilitated glucose transporter member 1 from Rattus norvegicus (Rat).